A 539-amino-acid polypeptide reads, in one-letter code: Chaperonin GroEL (539 aa).

ATP is bound by residues 29-32 (TLGP), 86-90 (DGTTT), glycine 413, 479-481 (DAL), and aspartate 495.

Belongs to the chaperonin (HSP60) family. In terms of assembly, forms a cylinder of 14 subunits composed of two heptameric rings stacked back-to-back. Interacts with the co-chaperonin GroES.

The protein resides in the cytoplasm. It catalyses the reaction ATP + H2O + a folded polypeptide = ADP + phosphate + an unfolded polypeptide.. Functionally, together with its co-chaperonin GroES, plays an essential role in assisting protein folding. The GroEL-GroES system forms a nano-cage that allows encapsulation of the non-native substrate proteins and provides a physical environment optimized to promote and accelerate protein folding. This is Chaperonin GroEL from Thermosipho africanus (strain TCF52B).